Here is a 223-residue protein sequence, read N- to C-terminus: 2-C-methyl-D-erythritol 4-phosphate cytidylyltransferase (223 aa).

Belongs to the IspD/TarI cytidylyltransferase family. IspD subfamily.

The enzyme catalyses 2-C-methyl-D-erythritol 4-phosphate + CTP + H(+) = 4-CDP-2-C-methyl-D-erythritol + diphosphate. Its pathway is isoprenoid biosynthesis; isopentenyl diphosphate biosynthesis via DXP pathway; isopentenyl diphosphate from 1-deoxy-D-xylulose 5-phosphate: step 2/6. Its function is as follows. Catalyzes the formation of 4-diphosphocytidyl-2-C-methyl-D-erythritol from CTP and 2-C-methyl-D-erythritol 4-phosphate (MEP). In Prochlorococcus marinus (strain MIT 9515), this protein is 2-C-methyl-D-erythritol 4-phosphate cytidylyltransferase.